The primary structure comprises 156 residues: CD-NTase-associated protein 8 (156 aa).

This sequence belongs to the bacterial HORMA family. HORMA3 subfamily. As to quaternary structure, interacts with Cap7 (also called HORMA2) and CdnC; forms CdnD:Cap7:Cap8 (also called CdnD:HORMA2:HORMA3) complexes with stoichiometries of 1:1:1 and 2:1:1.

CBASS (cyclic oligonucleotide-based antiphage signaling system) provides immunity against bacteriophage. The CD-NTase protein synthesizes cyclic nucleotides in response to infection; these serve as specific second messenger signals. The signals activate a diverse range of effectors, leading to bacterial cell death and thus abortive phage infection. A type III-C(AAA) CBASS system. Its function is as follows. A member of the CBASS system in this bacteria. It does not seem to bind a closure peptide, its exact function is unknown. The protein is CD-NTase-associated protein 8 of Pseudomonas aeruginosa.